We begin with the raw amino-acid sequence, 40 residues long: Lucifensin (40 aa).

3 disulfide bridges follow: C3–C30, C16–C36, and C20–C38.

It belongs to the invertebrate defensin family. Type 1 subfamily. In terms of processing, the disulfide bonds are essential for antimicrobial activity. In terms of tissue distribution, larval fat body, hemolymph and salivary glands (at protein level).

It localises to the secreted. In terms of biological role, shows strong antibacterial activity against the Gram-positive bacterium M.luteus. Also shows antibacterial activity against the Gram-positive bacteria E.fecalis, S.aureus, S.carnosus, S.pneumoniae and S.pyogenes and against a number of methicillin-resistant S.aureus and glycopeptide-intermediate S.aureus isolates. Does not show antibacterial activity against Gram-negative bacteria or antifungal activity against C.utilis. Shows slight antifungal activity against C.albicans. The sequence is that of Lucifensin from Lucilia cuprina (Green bottle fly).